The following is a 201-amino-acid chain: Holliday junction branch migration complex subunit RuvA (201 aa).

Residues 1–63 (MIEYIKGEIA…EDAYVLYGFA (63 aa)) form a domain I region. Residues 64-142 (DKQERELFLL…TGAMAATAVG (79 aa)) form a domain II region. Residues 143 to 153 (GAAGALLPAMN) form a flexible linker region. The domain III stretch occupies residues 153–201 (NAEVQEEAIAALTMLGFAAAPSQKAVLAILKEEPDAPVEKVIKLALKRL).

The protein belongs to the RuvA family. As to quaternary structure, homotetramer. Forms an RuvA(8)-RuvB(12)-Holliday junction (HJ) complex. HJ DNA is sandwiched between 2 RuvA tetramers; dsDNA enters through RuvA and exits via RuvB. An RuvB hexamer assembles on each DNA strand where it exits the tetramer. Each RuvB hexamer is contacted by two RuvA subunits (via domain III) on 2 adjacent RuvB subunits; this complex drives branch migration. In the full resolvosome a probable DNA-RuvA(4)-RuvB(12)-RuvC(2) complex forms which resolves the HJ.

It is found in the cytoplasm. Its function is as follows. The RuvA-RuvB-RuvC complex processes Holliday junction (HJ) DNA during genetic recombination and DNA repair, while the RuvA-RuvB complex plays an important role in the rescue of blocked DNA replication forks via replication fork reversal (RFR). RuvA specifically binds to HJ cruciform DNA, conferring on it an open structure. The RuvB hexamer acts as an ATP-dependent pump, pulling dsDNA into and through the RuvAB complex. HJ branch migration allows RuvC to scan DNA until it finds its consensus sequence, where it cleaves and resolves the cruciform DNA. The chain is Holliday junction branch migration complex subunit RuvA from Bacteroides fragilis (strain ATCC 25285 / DSM 2151 / CCUG 4856 / JCM 11019 / LMG 10263 / NCTC 9343 / Onslow / VPI 2553 / EN-2).